The sequence spans 443 residues: UDP-N-acetylmuramate--L-alanine ligase (443 aa).

Position 110–116 (110–116 (GAHGKTS)) interacts with ATP.

The protein belongs to the MurCDEF family.

Its subcellular location is the cytoplasm. It catalyses the reaction UDP-N-acetyl-alpha-D-muramate + L-alanine + ATP = UDP-N-acetyl-alpha-D-muramoyl-L-alanine + ADP + phosphate + H(+). Its pathway is cell wall biogenesis; peptidoglycan biosynthesis. In terms of biological role, cell wall formation. The chain is UDP-N-acetylmuramate--L-alanine ligase from Lactococcus lactis subsp. lactis (strain IL1403) (Streptococcus lactis).